A 300-amino-acid polypeptide reads, in one-letter code: Type II methyltransferase M.XycI (300 aa).

The disordered stretch occupies residues 109–129 (RGYRAPDKKNPARAMDVRPDT). Residues 112–127 (RAPDKKNPARAMDVRP) are compositionally biased toward basic and acidic residues.

The protein belongs to the N(4)/N(6)-methyltransferase family. N(4) subfamily.

It catalyses the reaction a 2'-deoxycytidine in DNA + S-adenosyl-L-methionine = an N(4)-methyl-2'-deoxycytidine in DNA + S-adenosyl-L-homocysteine + H(+). In terms of biological role, a beta subtype methylase, recognizes the double-stranded sequence 5'-CCCGGG-3', methylates C-2 on both strands, and protects the DNA from cleavage by the XcyI endonuclease. The protein is Type II methyltransferase M.XycI (xcyIM) of Xanthomonas campestris pv. cyanopsidis.